Reading from the N-terminus, the 354-residue chain is Uroporphyrinogen decarboxylase (354 aa).

Substrate is bound by residues 30-34 (RQAGR), Asp-79, Tyr-154, Ser-209, and His-333.

The protein belongs to the uroporphyrinogen decarboxylase family. As to quaternary structure, homodimer.

Its subcellular location is the cytoplasm. The catalysed reaction is uroporphyrinogen III + 4 H(+) = coproporphyrinogen III + 4 CO2. It functions in the pathway porphyrin-containing compound metabolism; protoporphyrin-IX biosynthesis; coproporphyrinogen-III from 5-aminolevulinate: step 4/4. Functionally, catalyzes the decarboxylation of four acetate groups of uroporphyrinogen-III to yield coproporphyrinogen-III. In Mycobacterium sp. (strain JLS), this protein is Uroporphyrinogen decarboxylase.